Reading from the N-terminus, the 334-residue chain is MDLTGAHMLKIHRPSIDHPFGVDLWHLFEQLSIKTIGWNPSEFEYIPGKTPMSQWSSVIVSITAYYVIILSGRAIMTNRKPLKQRRLFQLHNFILTIISGALLALLVEEVFRNYMRNGLFYCVCDSRHFTQRLVTLYYLNYLTKYLELMDTVFLFLKKKPLAFLHCYHHGITALLCFTQLLGRTSVQWGVIGLNLYVHVIMYSYYFLAACGRRVWWKQWVTRVQIIQFVLDLILCYFGTYSHIAFRYFPWLPHVGDCSGSLFAAFFGCGVLSSYLFLFIGFYINTYIKRGAKKNQRKAAGKADNTSVAAAAGSEALAATTATNASPFSARSRKL.

Residues 1–51 lie on the Lumenal side of the membrane; it reads MDLTGAHMLKIHRPSIDHPFGVDLWHLFEQLSIKTIGWNPSEFEYIPGKTP. A helical membrane pass occupies residues 52–72; the sequence is MSQWSSVIVSITAYYVIILSG. At 73–86 the chain is on the cytoplasmic side; sequence RAIMTNRKPLKQRR. Residues 87 to 107 traverse the membrane as a helical segment; sequence LFQLHNFILTIISGALLALLV. Topologically, residues 108–135 are lumenal; it reads EEVFRNYMRNGLFYCVCDSRHFTQRLVT. Residues 136-156 form a helical membrane-spanning segment; that stretch reads LYYLNYLTKYLELMDTVFLFL. The Cytoplasmic segment spans residues 157 to 160; the sequence is KKKP. Residues 161-181 form a helical membrane-spanning segment; it reads LAFLHCYHHGITALLCFTQLL. At 182-187 the chain is on the lumenal side; sequence GRTSVQ. A helical transmembrane segment spans residues 188 to 208; the sequence is WGVIGLNLYVHVIMYSYYFLA. Residues 209 to 224 are Cytoplasmic-facing; it reads ACGRRVWWKQWVTRVQ. A helical membrane pass occupies residues 225–245; sequence IIQFVLDLILCYFGTYSHIAF. Over 246-260 the chain is Lumenal; sequence RYFPWLPHVGDCSGS. Residues 261-281 traverse the membrane as a helical segment; the sequence is LFAAFFGCGVLSSYLFLFIGF. The Cytoplasmic portion of the chain corresponds to 282-334; it reads YINTYIKRGAKKNQRKAAGKADNTSVAAAAGSEALAATTATNASPFSARSRKL. Residue S325 is modified to Phosphoserine.

The protein belongs to the ELO family.

It is found in the endoplasmic reticulum membrane. The catalysed reaction is a very-long-chain acyl-CoA + malonyl-CoA + H(+) = a very-long-chain 3-oxoacyl-CoA + CO2 + CoA. In terms of biological role, may be involved in the synthesis of very long chain fatty acids. The sequence is that of Putative fatty acid elongase 1 from Schizosaccharomyces pombe (strain 972 / ATCC 24843) (Fission yeast).